Consider the following 127-residue polypeptide: Small integral membrane protein 33 (127 aa).

Residue Asn-15 is glycosylated (N-linked (GlcNAc...) asparagine). The chain crosses the membrane as a helical span at residues 38-58 (PLLAAIIAAFVLLAICIVLAV).

It is found in the membrane. The protein is Small integral membrane protein 33 of Mus musculus (Mouse).